The following is a 342-amino-acid chain: Global transcription regulator FGP1 (342 aa).

A disordered region spans residues 91 to 113; sequence FSPGEKKRASKKPKKQAGVAKAY.

This sequence belongs to the MIT1/WOR1 family.

The protein resides in the nucleus. Functionally, global transcriptional regulator of pathogenicity. Regulates many genes during growth in putrescine medium and during infection. Involved in the developmental processes of conidium formation and sexual reproduction and modulates a morphological change that accompanies mycotoxin production. This is Global transcription regulator FGP1 from Gibberella zeae (strain ATCC MYA-4620 / CBS 123657 / FGSC 9075 / NRRL 31084 / PH-1) (Wheat head blight fungus).